Consider the following 309-residue polypeptide: Formamidopyrimidine-DNA glycosylase (309 aa).

The Schiff-base intermediate with DNA role is filled by Pro2. Glu3 functions as the Proton donor in the catalytic mechanism. The Proton donor; for beta-elimination activity role is filled by Lys56. Residues His106 and Arg129 each coordinate DNA. The segment at 271–305 (NVYGRQGNACPHCESTLENIKLNGRASVYCPLCQP) adopts an FPG-type zinc-finger fold. Residue Arg295 is the Proton donor; for delta-elimination activity of the active site.

It belongs to the FPG family. Monomer. The cofactor is Zn(2+).

The catalysed reaction is Hydrolysis of DNA containing ring-opened 7-methylguanine residues, releasing 2,6-diamino-4-hydroxy-5-(N-methyl)formamidopyrimidine.. It catalyses the reaction 2'-deoxyribonucleotide-(2'-deoxyribose 5'-phosphate)-2'-deoxyribonucleotide-DNA = a 3'-end 2'-deoxyribonucleotide-(2,3-dehydro-2,3-deoxyribose 5'-phosphate)-DNA + a 5'-end 5'-phospho-2'-deoxyribonucleoside-DNA + H(+). In terms of biological role, involved in base excision repair of DNA damaged by oxidation or by mutagenic agents. Acts as a DNA glycosylase that recognizes and removes damaged bases. Has a preference for oxidized purines, such as 7,8-dihydro-8-oxoguanine (8-oxoG). Has AP (apurinic/apyrimidinic) lyase activity and introduces nicks in the DNA strand. Cleaves the DNA backbone by beta-delta elimination to generate a single-strand break at the site of the removed base with both 3'- and 5'-phosphates. The protein is Formamidopyrimidine-DNA glycosylase of Psychrobacter arcticus (strain DSM 17307 / VKM B-2377 / 273-4).